A 315-amino-acid polypeptide reads, in one-letter code: Calumenin-B (315 aa).

A signal peptide spans 1–19 (MEQWPLLFVVALCILQSSS). A compositionally biased stretch (basic and acidic residues) spans 22–39 (MEKKDRVHHDAPLSNKDH). The disordered stretch occupies residues 22-42 (MEKKDRVHHDAPLSNKDHDDE). EF-hand domains lie at 68 to 103 (ESKERLGKIVEKIDEDHDGFVTADEMKRWIKHAQRR), 104 to 139 (WIYEDVDRQWQAHDLNSDSFVSWEEYKDATYGYILD), 151 to 186 (QMMTRDERRFKMADQDGDLRANKEEFTAFLHPEEFD), 188 to 223 (MKDIVVLETMEDIDKNGDGLIDLNEYIGDMYSQNGD), 229 to 264 (WVKTEREQFTEFRDKNKDGRMDKDETRDWILPADYD), and 265 to 300 (HAEAEAKHLLYESDADKDGRLTKQEIVDKYDLFVGS). Ca(2+)-binding residues include Asp81, Asp83, Asp85, Glu92, Asp117, Asn119, Asp121, Glu128, Asp164, Asp166, Asp168, Arg170, Glu175, Asp201, Asn203, Asp205, Glu212, Asp242, Asn244, Asp246, Arg248, Glu253, Asp278, Asp280, Asp282, Arg284, and Glu289. Residues 312–315 (HDEF) carry the Prevents secretion from ER motif.

It belongs to the CREC family. Interacts with ggcx.

The protein resides in the endoplasmic reticulum membrane. It is found in the golgi apparatus. It localises to the secreted. Its subcellular location is the melanosome. The protein localises to the sarcoplasmic reticulum lumen. Its function is as follows. Involved in regulation of vitamin K-dependent carboxylation of multiple N-terminal glutamate residues. Seems to inhibit gamma-carboxylase ggcx. Binds 7 calcium ions with a low affinity. The protein is Calumenin-B (calub) of Danio rerio (Zebrafish).